Reading from the N-terminus, the 472-residue chain is Serine/threonine-protein kinase ULK3 (472 aa).

One can recognise a Protein kinase domain in the interval 14–270 (FILTERLGSG…FKDFFAHPWV (257 aa)). ATP is bound by residues 20 to 28 (LGSGTYATV) and Lys-44. The active-site Proton acceptor is Asp-137. Ser-176 carries the post-translational modification Phosphoserine. The region spanning 280–348 (SLAQARALVV…SRAEELKAIV (69 aa)) is the MIT 1 domain. 3 positions are modified to phosphoserine; by autocatalysis: Ser-350, Ser-384, and Ser-464. The MIT 2 domain occupies 375–444 (RLLAALEVAS…ARAEYLKEQI (70 aa)).

Belongs to the protein kinase superfamily. Ser/Thr protein kinase family. APG1/unc-51/ULK1 subfamily. As to quaternary structure, interacts (via protein kinase domain) with SUFU. Autophosphorylated. Autophosphorylation is blocked by interaction with SUFU.

It is found in the cytoplasm. It catalyses the reaction L-seryl-[protein] + ATP = O-phospho-L-seryl-[protein] + ADP + H(+). It carries out the reaction L-threonyl-[protein] + ATP = O-phospho-L-threonyl-[protein] + ADP + H(+). In terms of biological role, serine/threonine protein kinase that acts as a regulator of Sonic hedgehog (SHH) signaling and autophagy. Acts as a negative regulator of SHH signaling in the absence of SHH ligand: interacts with SUFU, thereby inactivating the protein kinase activity and preventing phosphorylation of GLI proteins (GLI1, GLI2 and/or GLI3). Positively regulates SHH signaling in the presence of SHH: dissociates from SUFU, autophosphorylates and mediates phosphorylation of GLI2, activating it and promoting its nuclear translocation. Phosphorylates in vitro GLI2, as well as GLI1 and GLI3, although less efficiently. Also acts as a regulator of autophagy: following cellular senescence, able to induce autophagy. In Mus musculus (Mouse), this protein is Serine/threonine-protein kinase ULK3 (Ulk3).